We begin with the raw amino-acid sequence, 329 residues long: Glycerol-3-phosphate dehydrogenase [NAD(P)+] (329 aa).

NADPH is bound by residues Ser13, Trp14, His34, and Lys105. Residues Lys105, Gly134, and Ser136 each contribute to the sn-glycerol 3-phosphate site. Residue Ala138 participates in NADPH binding. 5 residues coordinate sn-glycerol 3-phosphate: Lys189, Asp242, Ser252, Arg253, and Asn254. The active-site Proton acceptor is the Lys189. Arg253 contributes to the NADPH binding site. The NADPH site is built by Val277 and Glu279.

This sequence belongs to the NAD-dependent glycerol-3-phosphate dehydrogenase family.

The protein resides in the cytoplasm. The enzyme catalyses sn-glycerol 3-phosphate + NAD(+) = dihydroxyacetone phosphate + NADH + H(+). It carries out the reaction sn-glycerol 3-phosphate + NADP(+) = dihydroxyacetone phosphate + NADPH + H(+). The protein operates within membrane lipid metabolism; glycerophospholipid metabolism. Catalyzes the reduction of the glycolytic intermediate dihydroxyacetone phosphate (DHAP) to sn-glycerol 3-phosphate (G3P), the key precursor for phospholipid synthesis. The chain is Glycerol-3-phosphate dehydrogenase [NAD(P)+] from Legionella pneumophila (strain Corby).